The chain runs to 266 residues: uncharacterized protein (266 aa).

This is an uncharacterized protein from Acanthamoeba polyphaga (Amoeba).